Here is a 62-residue protein sequence, read N- to C-terminus: MGMRMMFTVFLLVVLATTVVSFTLDRASDGANAAADLVARGIRGNCCMFHTCPIDYSRFYCP.

The first 21 residues, 1–21, serve as a signal peptide directing secretion; sequence MGMRMMFTVFLLVVLATTVVS. Positions 22-40 are excised as a propeptide; the sequence is FTLDRASDGANAAADLVAR. 2 disulfides stabilise this stretch: Cys46–Cys52 and Cys47–Cys61.

It belongs to the conotoxin A superfamily. Post-translationally, both Pro-53 and Pro-62 are not in cis/trans isomerization. As to expression, expressed by the venom duct.

Its subcellular location is the secreted. Functionally, probable neurotoxin with unknown target. Possibly targets ion channels. This is Conotoxin Pl168 from Conus planorbis (Planorbis cone).